A 152-amino-acid chain; its full sequence is Transcription elongation factor Spt5 (152 aa).

Positions 98–127 (EGDLVEVVSGPFRGMQAQVVKVTEGKGEVV) constitute a KOW domain.

Belongs to the archaeal Spt5 family. Heterodimer composed of Spt4 and Spt5. Interacts with RNA polymerase (RNAP).

In terms of biological role, stimulates transcription elongation. This Acidianus ambivalens (Desulfurolobus ambivalens) protein is Transcription elongation factor Spt5.